The primary structure comprises 533 residues: Zinc finger protein 26 (533 aa).

Residues 14–85 (LSFKDISMEF…NAKISRQSCP (72 aa)) enclose the KRAB domain. 13 consecutive C2H2-type zinc fingers follow at residues 174 to 196 (CVCS…LRIH), 202 to 224 (YECS…QRVH), 230 to 252 (YSCS…QEIH), 258 to 280 (YGCS…QRSH), 286 to 308 (YECS…QRTH), 314 to 336 (HKCS…IRMH), 342 to 364 (YQCS…QGVH), 370 to 392 (YQCG…LRAH), 398 to 420 (YGCS…RRTH), 426 to 448 (YECS…QRTH), 454 to 476 (YECN…QKTH), 482 to 504 (FKCS…QRVH), and 510 to 532 (WKCS…RKTH).

Belongs to the krueppel C2H2-type zinc-finger protein family.

Its subcellular location is the nucleus. May be involved in transcriptional regulation. The chain is Zinc finger protein 26 (ZNF26) from Homo sapiens (Human).